The chain runs to 331 residues: Phosphoribosylformylglycinamidine cyclo-ligase (331 aa).

Belongs to the AIR synthase family.

It localises to the cytoplasm. It catalyses the reaction 2-formamido-N(1)-(5-O-phospho-beta-D-ribosyl)acetamidine + ATP = 5-amino-1-(5-phospho-beta-D-ribosyl)imidazole + ADP + phosphate + H(+). It participates in purine metabolism; IMP biosynthesis via de novo pathway; 5-amino-1-(5-phospho-D-ribosyl)imidazole from N(2)-formyl-N(1)-(5-phospho-D-ribosyl)glycinamide: step 2/2. This is Phosphoribosylformylglycinamidine cyclo-ligase from Clostridium botulinum (strain Loch Maree / Type A3).